The chain runs to 116 residues: Small ribosomal subunit protein uS13 (116 aa).

Positions 92–116 (RRGLPVRGQNTKNNARTRKGAKRSR) are disordered. A compositionally biased stretch (basic residues) spans 106–116 (ARTRKGAKRSR).

It belongs to the universal ribosomal protein uS13 family. As to quaternary structure, part of the 30S ribosomal subunit. Forms a loose heterodimer with protein S19. Forms two bridges to the 50S subunit in the 70S ribosome.

In terms of biological role, located at the top of the head of the 30S subunit, it contacts several helices of the 16S rRNA. In the 70S ribosome it contacts the 23S rRNA (bridge B1a) and protein L5 of the 50S subunit (bridge B1b), connecting the 2 subunits; these bridges are implicated in subunit movement. Contacts the tRNAs in the A and P-sites. The polypeptide is Small ribosomal subunit protein uS13 (Lactobacillus delbrueckii subsp. bulgaricus (strain ATCC 11842 / DSM 20081 / BCRC 10696 / JCM 1002 / NBRC 13953 / NCIMB 11778 / NCTC 12712 / WDCM 00102 / Lb 14)).